Consider the following 122-residue polypeptide: Large ribosomal subunit protein uL14 (122 aa).

It belongs to the universal ribosomal protein uL14 family. Part of the 50S ribosomal subunit. Forms a cluster with proteins L3 and L19. In the 70S ribosome, L14 and L19 interact and together make contacts with the 16S rRNA in bridges B5 and B8.

In terms of biological role, binds to 23S rRNA. Forms part of two intersubunit bridges in the 70S ribosome. This Borrelia recurrentis (strain A1) protein is Large ribosomal subunit protein uL14.